A 503-amino-acid chain; its full sequence is Glycerol kinase (503 aa).

Residue Thr14 participates in ADP binding. Residues Thr14, Thr15, and Ser16 each contribute to the ATP site. Sn-glycerol 3-phosphate is bound at residue Thr14. An ADP-binding site is contributed by Arg18. Sn-glycerol 3-phosphate is bound by residues Arg84, Glu85, Tyr136, and Asp246. Glycerol-binding residues include Arg84, Glu85, Tyr136, Asp246, and Gln247. Positions 268 and 311 each coordinate ADP. Residues Thr268, Gly311, Gln315, and Gly412 each contribute to the ATP site. Gly412 and Asn416 together coordinate ADP.

It belongs to the FGGY kinase family.

It carries out the reaction glycerol + ATP = sn-glycerol 3-phosphate + ADP + H(+). Its pathway is polyol metabolism; glycerol degradation via glycerol kinase pathway; sn-glycerol 3-phosphate from glycerol: step 1/1. With respect to regulation, inhibited by fructose 1,6-bisphosphate (FBP). Functionally, key enzyme in the regulation of glycerol uptake and metabolism. Catalyzes the phosphorylation of glycerol to yield sn-glycerol 3-phosphate. This is Glycerol kinase from Haemophilus influenzae (strain 86-028NP).